The primary structure comprises 275 residues: Dermonecrotic toxin LruSicTox-alphaIV1 (275 aa).

The active site involves His5. Residues Glu25 and Asp27 each contribute to the Mg(2+) site. His41 acts as the Nucleophile in catalysis. Cystine bridges form between Cys45–Cys51 and Cys47–Cys192. Asp85 provides a ligand contact to Mg(2+).

This sequence belongs to the arthropod phospholipase D family. Class II subfamily. The cofactor is Mg(2+). As to expression, expressed by the venom gland.

It localises to the secreted. It catalyses the reaction an N-(acyl)-sphingosylphosphocholine = an N-(acyl)-sphingosyl-1,3-cyclic phosphate + choline. It carries out the reaction an N-(acyl)-sphingosylphosphoethanolamine = an N-(acyl)-sphingosyl-1,3-cyclic phosphate + ethanolamine. The enzyme catalyses a 1-acyl-sn-glycero-3-phosphocholine = a 1-acyl-sn-glycero-2,3-cyclic phosphate + choline. The catalysed reaction is a 1-acyl-sn-glycero-3-phosphoethanolamine = a 1-acyl-sn-glycero-2,3-cyclic phosphate + ethanolamine. In terms of biological role, dermonecrotic toxins cleave the phosphodiester linkage between the phosphate and headgroup of certain phospholipids (sphingolipid and lysolipid substrates), forming an alcohol (often choline) and a cyclic phosphate. This toxin acts on sphingomyelin (SM). It may also act on ceramide phosphoethanolamine (CPE), lysophosphatidylcholine (LPC) and lysophosphatidylethanolamine (LPE), but not on lysophosphatidylserine (LPS), and lysophosphatidylglycerol (LPG). It acts by transphosphatidylation, releasing exclusively cyclic phosphate products as second products. Induces dermonecrosis, hemolysis, increased vascular permeability, edema, inflammatory response, and platelet aggregation. In Loxosceles rufescens (Mediterranean recluse spider), this protein is Dermonecrotic toxin LruSicTox-alphaIV1.